Here is a 258-residue protein sequence, read N- to C-terminus: MRRLLIIGNWKLNGNKNTITNLIITLVNTFYNISKCNVAIAPPVMYLDITKRYLLNSRIQLCAQNVDIHLSGSFTGDISAEMLQDLNVRYALIGHSERRIHHKENDAYIAKKFFILKKVGLIPILCVGENKREYDSGYTQSVCINQINTIITLLGIEAFKNSVIAYEPIWAIGSGASASPENAQLVHKSIRDYIASYDTSIADKITIQYGGSVTPENVTKFFDQKDIDGVLVGAASLNANSFSMIVQTAENHKKSYPA.

Residue 9–11 coordinates substrate; it reads NWK. H95 acts as the Electrophile in catalysis. E167 (proton acceptor) is an active-site residue. The substrate site is built by G173 and S212.

Belongs to the triosephosphate isomerase family. In terms of assembly, homodimer.

It is found in the cytoplasm. It carries out the reaction D-glyceraldehyde 3-phosphate = dihydroxyacetone phosphate. The protein operates within carbohydrate biosynthesis; gluconeogenesis. Its pathway is carbohydrate degradation; glycolysis; D-glyceraldehyde 3-phosphate from glycerone phosphate: step 1/1. Its function is as follows. Involved in the gluconeogenesis. Catalyzes stereospecifically the conversion of dihydroxyacetone phosphate (DHAP) to D-glyceraldehyde-3-phosphate (G3P). The polypeptide is Triosephosphate isomerase (Blochmanniella pennsylvanica (strain BPEN)).